We begin with the raw amino-acid sequence, 273 residues long: Dermonecrotic toxin LdSicTox-alphaIB1aii (273 aa).

Histidine 5 is a catalytic residue. Mg(2+)-binding residues include glutamate 25 and aspartate 27. The active-site Nucleophile is histidine 41. Disulfide bonds link cysteine 45–cysteine 51 and cysteine 47–cysteine 190. Mg(2+) is bound at residue aspartate 85. Asparagine 250 carries N-linked (GlcNAc...) asparagine glycosylation.

The protein belongs to the arthropod phospholipase D family. Class II subfamily. Requires Mg(2+) as cofactor. Expressed by the venom gland.

It localises to the secreted. The enzyme catalyses an N-(acyl)-sphingosylphosphocholine = an N-(acyl)-sphingosyl-1,3-cyclic phosphate + choline. It carries out the reaction an N-(acyl)-sphingosylphosphoethanolamine = an N-(acyl)-sphingosyl-1,3-cyclic phosphate + ethanolamine. The catalysed reaction is a 1-acyl-sn-glycero-3-phosphocholine = a 1-acyl-sn-glycero-2,3-cyclic phosphate + choline. It catalyses the reaction a 1-acyl-sn-glycero-3-phosphoethanolamine = a 1-acyl-sn-glycero-2,3-cyclic phosphate + ethanolamine. In terms of biological role, dermonecrotic toxins cleave the phosphodiester linkage between the phosphate and headgroup of certain phospholipids (sphingolipid and lysolipid substrates), forming an alcohol (often choline) and a cyclic phosphate. This toxin acts on sphingomyelin (SM). It may also act on ceramide phosphoethanolamine (CPE), lysophosphatidylcholine (LPC) and lysophosphatidylethanolamine (LPE), but not on lysophosphatidylserine (LPS), and lysophosphatidylglycerol (LPG). It acts by transphosphatidylation, releasing exclusively cyclic phosphate products as second products. Induces dermonecrosis, hemolysis, increased vascular permeability, edema, inflammatory response, and platelet aggregation. The protein is Dermonecrotic toxin LdSicTox-alphaIB1aii of Loxosceles deserta (Desert recluse spider).